A 324-amino-acid chain; its full sequence is Methenyltetrahydromethanopterin cyclohydrolase (324 aa).

The protein belongs to the MCH family.

The protein resides in the cytoplasm. It carries out the reaction 5,10-methenyl-5,6,7,8-tetrahydromethanopterin + H2O = N(5)-formyl-5,6,7,8-tetrahydromethanopterin + H(+). Its pathway is one-carbon metabolism; formaldehyde degradation; formate from formaldehyde (H(4)MPT route): step 3/5. Its function is as follows. Catalyzes the hydrolysis of methenyl-H(4)MPT(+) to 5-formyl-H(4)MPT. The protein is Methenyltetrahydromethanopterin cyclohydrolase of Methylobacterium nodulans (strain LMG 21967 / CNCM I-2342 / ORS 2060).